We begin with the raw amino-acid sequence, 215 residues long: Myelin protein zero-like protein 2 (215 aa).

Residues 1–26 (MYGKSSTRAVLLLLGIQLTALWPIAA) form the signal peptide. An Ig-like V-type domain is found at 27-141 (VEIYTSRVLE…DGVIGEIRLS (115 aa)). Over 27–154 (VEIYTSRVLE…TVRFSEIHFL (128 aa)) the chain is Extracellular. N-linked (GlcNAc...) asparagine glycans are attached at residues asparagine 39 and asparagine 118. Cysteine 47 and cysteine 123 form a disulfide bridge. Residues 155-175 (ALAIGSACALMIIIVIVVVLF) form a helical membrane-spanning segment. Residues 176–215 (QHYRKKRWAERAHKVVEIKSKEEERLNQEKKVSVYLEDTD) are Cytoplasmic-facing.

It belongs to the myelin P0 protein family. As to expression, widely expressed. In fetal tissues, highest expression in the inner ear. In adult tissues, highest levels in thymus and lung.

The protein resides in the membrane. In terms of biological role, mediates homophilic cell-cell adhesion. The sequence is that of Myelin protein zero-like protein 2 (MPZL2) from Homo sapiens (Human).